A 502-amino-acid chain; its full sequence is Protein ANKUB1 (502 aa).

This Homo sapiens (Human) protein is Protein ANKUB1 (ANKUB1).